Consider the following 327-residue polypeptide: Cyclic AMP-responsive element-binding protein 1 (327 aa).

2 disordered regions span residues 1-29 and 94-113; these read MTMD…TVQA and SEDS…RREI. Residues 8–146 enclose the KID domain; that stretch reads DNQQSGDAAV…IEEEKSEEET (139 aa). Residues 20-29 are compositionally biased toward polar residues; it reads AESQQMTVQA. Position 119 is a phosphoserine; by CaMK1, CaMK2, CaMK4, PKB/AKT1 or PKB/AKT2, RPS6KA3, RPS6KA4, RPS6KA5 and SGK1 (Ser-119). A Glycyl lysine isopeptide (Lys-Gly) (interchain with G-Cter in SUMO2) cross-link involves residue Lys-122. The segment at 126–149 is disordered; it reads DLSSDAPGVPRIEEEKSEEETSAP. Ser-128 is modified (phosphoserine; by CaMK2). The residue at position 257 (Ser-257) is a Phosphoserine; by HIPK2. A bZIP domain is found at 269 to 327; that stretch reads ARKREVRLMKNREAARECRRKKKEYVKCLENRVAVLENQNKTLIEELKALKDLYCHKSD. Positions 270–295 are basic motif; that stretch reads RKREVRLMKNREAARECRRKKKEYVK. Residues Lys-271 and Lys-290 each participate in a glycyl lysine isopeptide (Lys-Gly) (interchain with G-Cter in SUMO1) cross-link. The segment at 297 to 318 is leucine-zipper; that stretch reads LENRVAVLENQNKTLIEELKAL.

Belongs to the bZIP family. As to quaternary structure, interacts with PPRC1. Binds DNA as a dimer. This dimer is stabilized by magnesium ions. Interacts, through the bZIP domain, with the coactivators CRTC1/TORC1, CRTC2/TORC2 and CRTC3/TORC3. When phosphorylated on Ser-119, binds CREBBP. Interacts with CREBL2; regulates CREB1 phosphorylation, stability and transcriptional activity. Interacts (phosphorylated form) with TOX3. Interacts with ARRB1. Binds to HIPK2. Interacts with SGK1. Interacts with TSSK4; this interaction facilitates phosphorylation on Ser-119. Forms a complex with KMT2A and CREBBP. Interacts with TOX4; CREB1 is required for full induction of TOX4-dependent activity and the interaction is increased by cAMP and inhibited by insulin. Post-translationally, phosphorylation of Ser-119 allows CREBBP binding. Stimulated by phosphorylation. Phosphorylation of both Ser-128 and Ser-119 in the SCN regulates the activity of CREB and participate in circadian rhythm generation. Phosphorylated upon calcium influx by CaMK4 and CaMK2 on Ser-119. CaMK4 is much more potent than CaMK2 in activating CREB. Phosphorylated by CaMK2 on Ser-128. Phosphorylation of Ser-128 blocks CREB-mediated transcription even when Ser-119 is phosphorylated. Phosphorylated by CaMK1. Phosphorylation of Ser-257 by HIPK2 in response to genotoxic stress promotes CREB1 activity, facilitating the recruitment of the coactivator CBP. Phosphorylated at Ser-119 by RPS6KA3, RPS6KA4 and RPS6KA5 in response to mitogenic or stress stimuli. CREBL2 positively regulates phosphorylation at Ser-119 thereby stimulating CREB1 transcriptional activity. In liver, phosphorylation is induced by fasting or glucagon in a circadian fashion. Phosphorylated by TSSK4 on Ser-119. Sumoylated with SUMO1. Sumoylation on Lys-290, but not on Lys-271, is required for nuclear localization of this protein. Sumoylation is enhanced under hypoxia, promoting nuclear localization and stabilization.

Its subcellular location is the nucleus. Its function is as follows. Phosphorylation-dependent transcription factor that stimulates transcription upon binding to the DNA cAMP response element (CRE), a sequence present in many viral and cellular promoters. Transcription activation is enhanced by the TORC coactivators which act independently of Ser-119 phosphorylation. Involved in different cellular processes including the synchronization of circadian rhythmicity and the differentiation of adipose cells. Regulates the expression of apoptotic and inflammatory response factors in cardiomyocytes in response to ERFE-mediated activation of AKT signaling. The sequence is that of Cyclic AMP-responsive element-binding protein 1 (Creb1) from Rattus norvegicus (Rat).